Here is a 225-residue protein sequence, read N- to C-terminus: MAVIVPVITVDGPSGAGKGTLCQALAKAFGWHLLDSGAIYRVLALAALHHHVDITSEDALVPLAANLDVRFIPNENGLSVILEGEDVSTEIRTETVGNTASQAATFPRVREALLRRQRAFRTAPGLIADGRDMGTIVFPDAQVKIFLDASAQERARRRMLQLQEKGFNVNFERLLSEIKERDYRDRNRAVAPLVAAKDALILDSTSLSIDEVIEKSLAYAKKICN.

ATP is bound at residue 12–20 (GPSGAGKGT).

Belongs to the cytidylate kinase family. Type 1 subfamily.

It is found in the cytoplasm. It carries out the reaction CMP + ATP = CDP + ADP. The enzyme catalyses dCMP + ATP = dCDP + ADP. The sequence is that of Cytidylate kinase from Proteus mirabilis (strain HI4320).